The chain runs to 730 residues: Exostosin-1a (730 aa).

Residues 1-6 (MQAKKR) are Cytoplasmic-facing. Residues 7-27 (YLILFSAGVCLILLFYLQGPA) traverse the membrane as a helical; Signal-anchor for type II membrane protein segment. Topologically, residues 28-730 (SRRTPKRGDD…RKKYRDIERL (703 aa)) are lumenal. Asparagine 314 carries an N-linked (GlcNAc...) asparagine glycan. The UDP-N-acetyl-alpha-D-glucosamine site is built by arginine 533, aspartate 549, glutamate 550, aspartate 551, glutamate 637, aspartate 638, and arginine 685. Aspartate 551 is a Mn(2+) binding site. A disulfide bond links cysteine 636 and cysteine 688. The active site involves aspartate 638.

This sequence belongs to the glycosyltransferase 47 family. Mn(2+) serves as cofactor.

It localises to the endoplasmic reticulum membrane. It carries out the reaction 3-O-{[(1-&gt;4)-beta-D-GlcA-(1-&gt;4)-alpha-D-GlcNAc](n)-(1-&gt;4)-beta-D-GlcA-(1-&gt;3)-beta-D-Gal-(1-&gt;3)-beta-D-Gal-(1-&gt;4)-beta-D-Xyl}-L-seryl-[protein] + UDP-N-acetyl-alpha-D-glucosamine = 3-O-{alpha-D-GlcNAc-[(1-&gt;4)-beta-D-GlcA-(1-&gt;4)-alpha-D-GlcNAc](n)-(1-&gt;4)-beta-D-GlcA-(1-&gt;3)-beta-D-Gal-(1-&gt;3)-beta-D-Gal-(1-&gt;4)-beta-D-Xyl}-L-seryl-[protein] + UDP + H(+). The catalysed reaction is 3-O-{alpha-D-GlcNAc-[(1-&gt;4)-beta-D-GlcA-(1-&gt;4)-alpha-D-GlcNAc](n)-(1-&gt;4)-beta-D-GlcA-(1-&gt;3)-beta-D-Gal-(1-&gt;3)-beta-D-Gal-(1-&gt;4)-beta-D-Xyl}-L-seryl-[protein] + UDP-alpha-D-glucuronate = 3-O-{[(1-&gt;4)-beta-D-GlcA-(1-&gt;4)-alpha-D-GlcNAc](n+1)-(1-&gt;4)-beta-D-GlcA-(1-&gt;3)-beta-D-Gal-(1-&gt;3)-beta-D-Gal-(1-&gt;4)-beta-D-Xyl}-L-seryl-[protein] + UDP + H(+). It participates in protein modification; protein glycosylation. Functionally, glycosyltransferase required for the biosynthesis of heparan-sulfate. This chain is Exostosin-1a (ext1a), found in Danio rerio (Zebrafish).